Here is a 126-residue protein sequence, read N- to C-terminus: Large ribosomal subunit protein uL22 (126 aa).

The protein belongs to the universal ribosomal protein uL22 family. In terms of assembly, part of the 50S ribosomal subunit.

This protein binds specifically to 23S rRNA; its binding is stimulated by other ribosomal proteins, e.g. L4, L17, and L20. It is important during the early stages of 50S assembly. It makes multiple contacts with different domains of the 23S rRNA in the assembled 50S subunit and ribosome. In terms of biological role, the globular domain of the protein is located near the polypeptide exit tunnel on the outside of the subunit, while an extended beta-hairpin is found that lines the wall of the exit tunnel in the center of the 70S ribosome. This chain is Large ribosomal subunit protein uL22, found in Ruegeria sp. (strain TM1040) (Silicibacter sp.).